Consider the following 457-residue polypeptide: tRNA (guanine(37)-N(1))-methyltransferase (457 aa).

S-adenosyl-L-methionine-binding positions include His225, 263-264 (DL), 291-292 (DG), and Asn358.

It belongs to the class I-like SAM-binding methyltransferase superfamily. TRM5/TYW2 family. As to quaternary structure, monomer.

It is found in the mitochondrion matrix. It localises to the nucleus. The protein resides in the cytoplasm. The catalysed reaction is guanosine(37) in tRNA + S-adenosyl-L-methionine = N(1)-methylguanosine(37) in tRNA + S-adenosyl-L-homocysteine + H(+). Its function is as follows. Specifically methylates the N1 position of guanosine-37 in various cytoplasmic and mitochondrial tRNAs. Methylation is not dependent on the nature of the nucleoside 5' of the target nucleoside. This is the first step in the biosynthesis of wybutosine (yW), a modified base adjacent to the anticodon of tRNAs and required for accurate decoding. This chain is tRNA (guanine(37)-N(1))-methyltransferase, found in Coprinopsis cinerea (strain Okayama-7 / 130 / ATCC MYA-4618 / FGSC 9003) (Inky cap fungus).